The sequence spans 635 residues: Threonine--tRNA ligase (635 aa).

Positions 1-61 (MINIKFPDGS…NHDCELRLIT (61 aa)) constitute a TGS domain. A catalytic region spans residues 242–533 (DHRKIGKALD…LIEHYAGNMP (292 aa)). Zn(2+) contacts are provided by Cys-333, His-384, and His-510.

It belongs to the class-II aminoacyl-tRNA synthetase family. Homodimer. Zn(2+) is required as a cofactor.

It localises to the cytoplasm. It carries out the reaction tRNA(Thr) + L-threonine + ATP = L-threonyl-tRNA(Thr) + AMP + diphosphate + H(+). Functionally, catalyzes the attachment of threonine to tRNA(Thr) in a two-step reaction: L-threonine is first activated by ATP to form Thr-AMP and then transferred to the acceptor end of tRNA(Thr). Also edits incorrectly charged L-seryl-tRNA(Thr). The sequence is that of Threonine--tRNA ligase from Francisella philomiragia subsp. philomiragia (strain ATCC 25017 / CCUG 19701 / FSC 153 / O#319-036).